A 348-amino-acid chain; its full sequence is MKISCEIIGKVDSGDVSKISMENNNGVVISTLTTGATLQEFLVPMETGALKNIVLGFSDFEDYYKNNLCACQSIGRVAGRIGKASYTHNMVLYSLPKNEGDNCLHGGPKGMQVQNWNYVTNLNDDYVETKFIRRLYSSVDGFPGDVTVSISYRLNNNNRLTILFEAFDVTESTVFNPTNHVYFNLSDKQDLSSHELQIYSDYRLELDSELIPTGQKINVDETNYDFRKTTDLLPRIEANNGFDDAFVVGGGTCDHVKEVAILHDKESGDGIEIFSNRNGLVIFTMDDIEDNIYFARDKGKMAKRREAIAMEAQTLPDAVNHKGFGDIILDKGHSVNYEIGFQYFNSSR.

Arg80 provides a ligand contact to substrate. His180 acts as the Proton donor in catalysis. Position 243 (Asp243) interacts with substrate. Residue Glu311 is the Proton acceptor of the active site.

This sequence belongs to the aldose epimerase family.

The enzyme catalyses alpha-D-glucose = beta-D-glucose. The protein operates within carbohydrate metabolism; hexose metabolism. Functionally, mutarotase converts alpha-aldose to the beta-anomer. It is active on D-glucose, L-arabinose, D-xylose, D-galactose, maltose and lactose. This Streptococcus thermophilus protein is Aldose 1-epimerase (galM).